The chain runs to 137 residues: Acidic phospholipase A2 PL-II (137 aa).

The signal sequence occupies residues 1 to 17 (AVCVSLLGASSIRPLPL). Cystine bridges form between Cys-28-Cys-89, Cys-44-Cys-136, Cys-46-Cys-62, Cys-61-Cys-117, Cys-68-Cys-110, Cys-78-Cys-103, and Cys-96-Cys-108. Residues Tyr-45, Gly-47, and Gly-49 each coordinate Ca(2+). Residue His-65 is part of the active site. Residue Asp-66 coordinates Ca(2+). Asp-111 is an active-site residue.

Ca(2+) serves as cofactor. In terms of tissue distribution, expressed by the venom gland.

It localises to the secreted. It carries out the reaction a 1,2-diacyl-sn-glycero-3-phosphocholine + H2O = a 1-acyl-sn-glycero-3-phosphocholine + a fatty acid + H(+). In terms of biological role, snake venom phospholipase A2 (PLA2) that may act in the hemostasis system of the prey. Exhibits hydrolytic activities, and prefers the anionic micelles (dPPC with deoxycholate) (54 umol/mg/min) to the zwitterionic micelles (dPPC with Triton X-100) (15 umol/mg/min). PLA2 catalyzes the calcium-dependent hydrolysis of the 2-acyl groups in 3-sn-phosphoglycerides. The sequence is that of Acidic phospholipase A2 PL-II from Walterinnesia aegyptia (Desert black snake).